A 317-amino-acid polypeptide reads, in one-letter code: Tetraspanin-15 (317 aa).

A disordered region spans residues 1-43 (MADNAQVVPVEEPAATATATATATATTEPEAKSSDQMESQSDN). At 1–60 (MADNAQVVPVEEPAATATATATATATTEPEAKSSDQMESQSDNKPPMGTLMALVNILAAG) the chain is on the cytoplasmic side. Residues 7-28 (VVPVEEPAATATATATATATTE) show a composition bias toward low complexity. The chain crosses the membrane as a helical span at residues 61 to 81 (VLPIFTFVLSLTLLGYAVWLL). The Extracellular portion of the chain corresponds to 82 to 96 (YMRSYDCEDILGLPR). Residues 97–117 (VQTLASVGLLAVFVVSNAALF) traverse the membrane as a helical segment. Residues 118-126 (LRRKFPMPA) are Cytoplasmic-facing. The helical transmembrane segment at 127–147 (LVVMVVVLLLMLFIGLAYAGV) threads the bilayer. The Extracellular segment spans residues 148–287 (NEMQSRRFPA…IRSVRRKWWQ (140 aa)). Asn-224 is a glycosylation site (N-linked (GlcNAc...) asparagine). A helical transmembrane segment spans residues 288–308 (LGIFLIVISILLLMSHLLIFL). The Cytoplasmic segment spans residues 309–317 (ATFWERFKG).

The protein belongs to the tetraspanin (TM4SF) family.

It localises to the membrane. Its function is as follows. May be involved in the regulation of cell differentiation. The sequence is that of Tetraspanin-15 (TET15) from Arabidopsis thaliana (Mouse-ear cress).